A 358-amino-acid chain; its full sequence is Alanine racemase (358 aa).

Lysine 35 serves as the catalytic Proton acceptor; specific for D-alanine. Lysine 35 bears the N6-(pyridoxal phosphate)lysine mark. Position 130 (arginine 130) interacts with substrate. Tyrosine 255 serves as the catalytic Proton acceptor; specific for L-alanine. Methionine 303 is a binding site for substrate.

This sequence belongs to the alanine racemase family. The cofactor is pyridoxal 5'-phosphate.

It catalyses the reaction L-alanine = D-alanine. The protein operates within amino-acid biosynthesis; D-alanine biosynthesis; D-alanine from L-alanine: step 1/1. Its function is as follows. Catalyzes the interconversion of L-alanine and D-alanine. May also act on other amino acids. This Shewanella sp. (strain W3-18-1) protein is Alanine racemase (alr).